Here is a 278-residue protein sequence, read N- to C-terminus: Orotidine 5'-phosphate decarboxylase (278 aa).

Catalysis depends on Lys-96, which acts as the Proton donor.

This sequence belongs to the OMP decarboxylase family. Type 2 subfamily.

The catalysed reaction is orotidine 5'-phosphate + H(+) = UMP + CO2. Its pathway is pyrimidine metabolism; UMP biosynthesis via de novo pathway; UMP from orotate: step 2/2. This chain is Orotidine 5'-phosphate decarboxylase, found in Salinispora arenicola (strain CNS-205).